Consider the following 378-residue polypeptide: Ribosomal RNA large subunit methyltransferase G (378 aa).

Belongs to the methyltransferase superfamily. RlmG family.

The protein localises to the cytoplasm. It carries out the reaction guanosine(1835) in 23S rRNA + S-adenosyl-L-methionine = N(2)-methylguanosine(1835) in 23S rRNA + S-adenosyl-L-homocysteine + H(+). Its function is as follows. Specifically methylates the guanine in position 1835 (m2G1835) of 23S rRNA. This Escherichia coli O139:H28 (strain E24377A / ETEC) protein is Ribosomal RNA large subunit methyltransferase G.